Here is a 441-residue protein sequence, read N- to C-terminus: Chromosome partition protein MukF (441 aa).

A leucine-zipper region spans residues 208-236; sequence LTETSSTLRELQDTLEAAGDKLQTSLLSI.

The protein belongs to the MukF family. In terms of assembly, interacts, and probably forms a ternary complex, with MukE and MukB via its C-terminal region. The complex formation is stimulated by calcium or magnesium. It is required for an interaction between MukE and MukB.

The protein resides in the cytoplasm. Its subcellular location is the nucleoid. Its function is as follows. Involved in chromosome condensation, segregation and cell cycle progression. May participate in facilitating chromosome segregation by condensation DNA from both sides of a centrally located replisome during cell division. Not required for mini-F plasmid partitioning. Probably acts via its interaction with MukB and MukE. Overexpression results in anucleate cells. It has a calcium binding activity. The chain is Chromosome partition protein MukF from Pectobacterium atrosepticum (strain SCRI 1043 / ATCC BAA-672) (Erwinia carotovora subsp. atroseptica).